The primary structure comprises 113 residues: Cell wall protein PGA59 (113 aa).

The first 18 residues, 1-18, serve as a signal peptide directing secretion; that stretch reads MQFSSAIILSAVAGSALA. Asparagine 22 and asparagine 80 each carry an N-linked (GlcNAc...) asparagine glycan. Glycine 92 carries the GPI-anchor amidated glycine lipid modification. Positions 93 to 113 are cleaved as a propeptide — removed in mature form; the sequence is AAAANAVPAVAAGLLALGAFM.

It belongs to the HWP1 family. In terms of processing, N- and O-glycosylated. Post-translationally, the GPI-anchor is attached to the protein in the endoplasmic reticulum and serves to target the protein to the cell surface. There, the glucosamine-inositol phospholipid moiety is cleaved off and the GPI-modified mannoprotein is covalently attached via its lipidless GPI glycan remnant to the 1,6-beta-glucan of the outer cell wall layer.

The protein localises to the secreted. The protein resides in the cell wall. It is found in the membrane. Functionally, cell wall protein necessary for cell wall integrity. Plays only a minor role in hyphal morphogenesis and is not critical to biofilm formation. This chain is Cell wall protein PGA59 (PGA59), found in Candida albicans (strain SC5314 / ATCC MYA-2876) (Yeast).